A 375-amino-acid chain; its full sequence is MARRYDELPHYPGIVDGPAALASFPETVPAVPGPYGPHRPPQPLPPGLDSDGLKREKDEIYGHPLFPLLALVFEKCELATCSPRDGAGAGLGTPPGGDVCSSDSFNEDIAAFAKQVRSERPLFSSNPELDNLMIQAIQVLRFHLLELEKVHDLCDNFCHRYITCLKGKMPIDLVIEDRDGGCREDFEDYPASCPSLPDQNNMWIRDHEDSGSVHLGTPGPSSGGLASQSGDNSSDQGDGLDTSVASPSSGGEDEDLDQERRRNKKRGIFPKVATNIMRAWLFQHLSHPYPSEEQKKQLAQDTGLTILQVNNWFINARRRIVQPMIDQSNRTGQGAAFSPEGQPIGGYTETQPHVAVRPPGSVGMSLNLEGEWHYL.

The disordered stretch occupies residues 25-51 (PETVPAVPGPYGPHRPPQPLPPGLDSD). The span at 31-46 (VPGPYGPHRPPQPLPP) shows a compositional bias: pro residues. One can recognise an MEIS N-terminal domain in the interval 96–179 (GGDVCSSDSF…PIDLVIEDRD (84 aa)). Disordered regions lie at residues 197-268 (PDQN…KRGI) and 329-348 (NRTG…GGYT). Low complexity predominate over residues 227–241 (SQSGDNSSDQGDGLD). Positions 262–324 (RNKKRGIFPK…NARRRIVQPM (63 aa)) form a DNA-binding region, homeobox; TALE-type.

This sequence belongs to the TALE/MEIS homeobox family.

The protein resides in the nucleus. Transcriptional regulator which directly modulates PDPK1 expression, thus promoting survival of pancreatic beta-cells. Also regulates expression of NDFIP1, BNIP3, and CCNG1. This is Homeobox protein Meis3 (MEIS3) from Homo sapiens (Human).